Consider the following 406-residue polypeptide: Probable delta-aminolevulinic acid dehydratase 2, chloroplastic (406 aa).

A chloroplast-targeting transit peptide spans 1–34 (MTSSMFRSPCKIPSVKGFEQKSYVGLKAASYNVR). Residue Lys275 is the Schiff-base intermediate with substrate of the active site. Positions 285 and 291 each coordinate 5-aminolevulinate. Glu307 provides a ligand contact to Mg(2+). Residue Lys322 is the Schiff-base intermediate with substrate of the active site. 5-aminolevulinate-binding residues include Ser348 and Tyr387.

This sequence belongs to the ALAD family. In terms of assembly, homooctamer. Requires Mg(2+) as cofactor.

It localises to the plastid. The protein localises to the chloroplast. The catalysed reaction is 2 5-aminolevulinate = porphobilinogen + 2 H2O + H(+). It functions in the pathway porphyrin-containing compound metabolism; protoporphyrin-IX biosynthesis; coproporphyrinogen-III from 5-aminolevulinate: step 1/4. It participates in porphyrin-containing compound metabolism; chlorophyll biosynthesis. Its function is as follows. Catalyzes an early step in the biosynthesis of tetrapyrroles. Binds two molecules of 5-aminolevulinate per subunit, each at a distinct site, and catalyzes their condensation to form porphobilinogen. This is Probable delta-aminolevulinic acid dehydratase 2, chloroplastic (HEMB2) from Arabidopsis thaliana (Mouse-ear cress).